The sequence spans 394 residues: Dual-specificity RNA methyltransferase RlmN (394 aa).

Residue E92 is the Proton acceptor of the active site. A Radical SAM core domain is found at 98–341; that stretch reads ENDRGTLCIS…TTVRRTRGDD (244 aa). C105 and C346 are oxidised to a cystine. [4Fe-4S] cluster-binding residues include C112, C116, and C119. Residues 166–167, S198, 220–222, and N303 each bind S-adenosyl-L-methionine; these read GE and SLH. Catalysis depends on C346, which acts as the S-methylcysteine intermediate. The interval 374–394 is disordered; sequence DSAVQRRADAAPSGSATETTR.

It belongs to the radical SAM superfamily. RlmN family. [4Fe-4S] cluster is required as a cofactor.

It is found in the cytoplasm. The enzyme catalyses adenosine(2503) in 23S rRNA + 2 reduced [2Fe-2S]-[ferredoxin] + 2 S-adenosyl-L-methionine = 2-methyladenosine(2503) in 23S rRNA + 5'-deoxyadenosine + L-methionine + 2 oxidized [2Fe-2S]-[ferredoxin] + S-adenosyl-L-homocysteine. The catalysed reaction is adenosine(37) in tRNA + 2 reduced [2Fe-2S]-[ferredoxin] + 2 S-adenosyl-L-methionine = 2-methyladenosine(37) in tRNA + 5'-deoxyadenosine + L-methionine + 2 oxidized [2Fe-2S]-[ferredoxin] + S-adenosyl-L-homocysteine. In terms of biological role, specifically methylates position 2 of adenine 2503 in 23S rRNA and position 2 of adenine 37 in tRNAs. m2A2503 modification seems to play a crucial role in the proofreading step occurring at the peptidyl transferase center and thus would serve to optimize ribosomal fidelity. The protein is Dual-specificity RNA methyltransferase RlmN of Methylibium petroleiphilum (strain ATCC BAA-1232 / LMG 22953 / PM1).